A 1396-amino-acid chain; its full sequence is G2/mitotic-specific cyclin-B3 (1396 aa).

Disordered regions lie at residues 1–64, 259–398, and 477–500; these read MPPP…TNAS, KEKP…PQME, and TTEK…PGEL. Positions 10 to 34 are enriched in basic and acidic residues; that stretch reads SKLETEKAQSNKITPREEQQSEKIG. The D-box motif lies at 54 to 62; it reads RSVFEDVTN. The span at 264 to 273 shows a compositional bias: basic residues; that stretch reads VKKPHFRKKK. The segment covering 306-315 has biased composition (polar residues); sequence LQENTNNKDA. S703 is modified (phosphoserine). Residues 775 to 796 form a disordered region; sequence VDEPLSHQSPHIQNHSDTTKEA. Residues 780–790 are compositionally biased toward polar residues; that stretch reads SHQSPHIQNHS.

It belongs to the cyclin family. Cyclin AB subfamily. In terms of assembly, interacts with CDK2 kinase. Ubiquitinated. Ubiquitination leads to its degradation during anaphase entry, after degradation of CCNB1. As to expression, expressed in testis. Also expressed in the fetal ovary, but not in the adult.

Its subcellular location is the nucleus. Cyclins are positive regulatory subunits of the cyclin-dependent kinases (CDKs), and thereby play an essential role in the control of the cell cycle, notably via their destruction during cell division. Its tissue specificity suggest that it may be required during early meiotic prophase I. In Mus musculus (Mouse), this protein is G2/mitotic-specific cyclin-B3 (Ccnb3).